Here is a 536-residue protein sequence, read N- to C-terminus: Zona pellucida sperm-binding protein 4 (536 aa).

Positions 1 to 21 are cleaved as a signal peptide; it reads MWLRPSIWLCFPLCLALPGQS. The Extracellular segment spans residues 22 to 511; the sequence is QPKAADDLGG…SRPPVDSHAL (490 aa). Asparagine 70 is a glycosylation site (N-linked (GlcNAc...) asparagine). Residues 142–184 enclose the P-type domain; sequence GLCDAVPVWDRLPCAPPPITQGECKQLGCCYNSEEVPSCYYGN. The ZP domain occupies 189-462; the sequence is RCTQDGHFSI…PICVTTCPAA (274 aa). N-linked (GlcNAc...) asparagine glycans are attached at residues asparagine 203 and asparagine 220. O-linked (GalNAc...) serine glycosylation is present at serine 293. Threonine 303 is a glycosylation site (O-linked (GalNAc...) threonine). A glycan (N-linked (GlcNAc...) asparagine) is linked at asparagine 333. Cysteine 368 and cysteine 442 are joined by a disulfide. The propeptide at 463 to 536 is removed in mature form; that stretch reads RRRRSSDIHF…VSYLVFRKWR (74 aa). The N-linked (GlcNAc...) asparagine glycan is linked to asparagine 474. The helical transmembrane segment at 512–532 threads the bilayer; the sequence is WVAGLLGSLIIGALLVSYLVF. Topologically, residues 533 to 536 are cytoplasmic; sequence RKWR.

It belongs to the ZP domain family. ZPB subfamily. In terms of processing, proteolytically cleaved before the transmembrane segment to yield the secreted ectodomain incorporated in the zona pellucida. Disulfide bonds are formed between the cysteines of three consecutive regions: Cys-368 and Cys-389, Cys-442 and Cys-447, Cys-455 and Cys-459. Post-translationally, N-glycosylated; contains bi-, tri- and tetra-antennary glycans with N-acetyllactosamine repeats. In terms of processing, O-glycosylated; contains sulfate-substituted glycans. As to expression, expressed in oocytes.

It localises to the zona pellucida. The protein resides in the cell membrane. Component of the zona pellucida, an extracellular matrix surrounding oocytes which mediates sperm binding, induction of the acrosome reaction and prevents post-fertilization polyspermy. The zona pellucida is composed of 3 to 4 glycoproteins, ZP1, ZP2, ZP3, and ZP4. ZP4 may act as a sperm receptor. The sequence is that of Zona pellucida sperm-binding protein 4 (ZP4) from Sus scrofa (Pig).